Reading from the N-terminus, the 165-residue chain is Destrin (165 aa).

A2 carries the post-translational modification N-acetylalanine. Residue S3 is modified to Phosphoserine. The ADF-H domain maps to 4 to 153; it reads GVQVADEVCR…NRTCIAEKLG (150 aa). Position 19 is an N6-acetyllysine (K19). The Nuclear localization signal motif lies at 30–34; it reads KKRKK.

The protein belongs to the actin-binding proteins ADF family. In terms of processing, ISGylated. Widely expressed. Not found in skeletal muscle.

Functionally, actin-depolymerizing protein. Severs actin filaments (F-actin) and binds to actin monomers (G-actin). Acts in a pH-independent manner. This is Destrin (Dstn) from Mus musculus (Mouse).